Reading from the N-terminus, the 138-residue chain is Nucleoside diphosphate kinase (138 aa).

ATP-binding residues include K10, F58, R86, T92, R103, and N113. H116 acts as the Pros-phosphohistidine intermediate in catalysis.

Belongs to the NDK family. In terms of assembly, homotetramer. The cofactor is Mg(2+).

Its subcellular location is the cytoplasm. The catalysed reaction is a 2'-deoxyribonucleoside 5'-diphosphate + ATP = a 2'-deoxyribonucleoside 5'-triphosphate + ADP. It carries out the reaction a ribonucleoside 5'-diphosphate + ATP = a ribonucleoside 5'-triphosphate + ADP. In terms of biological role, major role in the synthesis of nucleoside triphosphates other than ATP. The ATP gamma phosphate is transferred to the NDP beta phosphate via a ping-pong mechanism, using a phosphorylated active-site intermediate. This is Nucleoside diphosphate kinase from Haemophilus ducreyi (strain 35000HP / ATCC 700724).